The sequence spans 198 residues: Protein hunchback (198 aa).

Disordered regions lie at residues S16–S117 and N152–A198. The segment covering H17–H31 has biased composition (basic residues). Composition is skewed to low complexity over residues S35–Q46 and Q68–Q83. The segment covering P95–P105 has biased composition (polar residues). The span at E179–A198 shows a compositional bias: basic and acidic residues.

Belongs to the hunchback C2H2-type zinc-finger protein family.

The protein resides in the nucleus. Its function is as follows. Gap class segmentation protein that controls development of head structures. The polypeptide is Protein hunchback (hb) (Drosophila disjuncta (Fruit fly)).